Consider the following 359-residue polypeptide: Phospho-N-acetylmuramoyl-pentapeptide-transferase (359 aa).

Transmembrane regions (helical) follow at residues 3–23 (QILIAVAIALAVAILLTPVLI), 55–75 (VAIIAGIWVSYFGTHLVGVLM), 84–104 (GLLVLGLATSLGVVGFLDDLI), 117–137 (TAKTVGILVAAVLFGVLALQF), 156–176 (IATVTLAPAVFVLFCVVVVSA), 190–210 (LAAGAMAMVCAAYVLITFWQF), 231–251 (LAIIAAATAGACIGFLWWNAA), 255–275 (IFMGDTGSLALGGIIAGLSVT), 283–303 (VVLGALFVAEVTSVVVQILAF), and 330–350 (VIIRFWLLTAIACGLGVALFY).

This sequence belongs to the glycosyltransferase 4 family. MraY subfamily. Mg(2+) serves as cofactor.

It is found in the cell membrane. The enzyme catalyses UDP-N-acetyl-alpha-D-muramoyl-L-alanyl-gamma-D-glutamyl-meso-2,6-diaminopimeloyl-D-alanyl-D-alanine + di-trans,octa-cis-undecaprenyl phosphate = di-trans,octa-cis-undecaprenyl diphospho-N-acetyl-alpha-D-muramoyl-L-alanyl-D-glutamyl-meso-2,6-diaminopimeloyl-D-alanyl-D-alanine + UMP. Its pathway is cell wall biogenesis; peptidoglycan biosynthesis. Functionally, catalyzes the initial step of the lipid cycle reactions in the biosynthesis of the cell wall peptidoglycan: transfers peptidoglycan precursor phospho-MurNAc-pentapeptide from UDP-MurNAc-pentapeptide onto the lipid carrier undecaprenyl phosphate, yielding undecaprenyl-pyrophosphoryl-MurNAc-pentapeptide, known as lipid I. The sequence is that of Phospho-N-acetylmuramoyl-pentapeptide-transferase from Mycolicibacterium gilvum (strain PYR-GCK) (Mycobacterium gilvum (strain PYR-GCK)).